We begin with the raw amino-acid sequence, 536 residues long: Uridine 5'-monophosphate transferase (536 aa).

The tract at residues 22-84 (ADHPTHTPED…GLQQCSSSPS (63 aa)) is disordered. Residues 31–45 (DSPQTVPSPRSSSAH) show a composition bias toward polar residues. A compositionally biased stretch (basic and acidic residues) spans 48–60 (EIQELRSLQETRP). Residues 66–84 (RSQSRSSKHGLQQCSSSPS) show a composition bias toward polar residues. LRR repeat units lie at residues 140 to 164 (AGQAGTQLTLRDLNLSQLPPGLHRL), 165 to 189 (AHLRDLDVADNVNLTRLPEDLSLCK), 191 to 211 (LERINADGCSIAALPSKIGAL), 212 to 234 (KNLSEISLAFNELRTLPDSIGQC), 236 to 257 (SLTTIVVPGCKINKLPASLANL), and 258 to 282 (TQLKKLDVAANIELSELSPHMNLDD). Positions 377 to 533 (ITLDRIFKLN…LEGIATVMNQ (157 aa)) constitute a Fido domain.

The protein in the C-terminal section; belongs to the fic family. In terms of assembly, interacts with several members of the Arabidopsis RLCK VIIa subfamily.

The protein localises to the secreted. Its subcellular location is the host cell. It localises to the host cell membrane. The enzyme catalyses L-seryl-[protein] + UTP = O-(5'-uridylyl)-L-seryl-[protein] + diphosphate. The catalysed reaction is L-threonyl-[protein] + UTP = uridylyl-L-threonyl-[protein] + diphosphate. In terms of biological role, functions both as a virulence and an avirulence gene in Arabidopsis. Causes disease on the Kashmir (Kas) ecotype, but not on Columbia (Col-0) ecotype. Acts by directly uridylylating the conserved phosphorylation sites in the activation loop of a number of host receptor-like cytoplasmic protein kinases (RLCK), including BIK1, RIPK, PBL1 and PBL2, preventing the activation of these kinases and subsequent signal transduction. In susceptible Arabidopsis plants, uridylylation of BIK1 inhibits the PAMP-triggered immunity (PTI) signaling cascade and thereby promotes bacterial virulence. It also inhibits RPM1-dependent effector-triggered immunity (ETI) in mesophyll tissues by targeting RIPK. In contrast, in the resistant ecotype Col-0, xopAC is a major avirulence gene. Uridylylation of PBL2 triggers the PBL2-RKS1 interaction and thus the assembly of the PBL2-RKS1-ZAR1 complex, which, in turn, activates effector-triggered immunity (ETI) against X.campestris. This Xanthomonas campestris pv. campestris (strain 8004) protein is Uridine 5'-monophosphate transferase.